A 465-amino-acid chain; its full sequence is Alpha-galacturonidase (465 aa).

11 to 78 (ITIAYIGGGS…GKWLYKACET (68 aa)) lines the NAD(+) pocket. A substrate-binding site is contributed by asparagine 157. Cysteine 179 is a binding site for Mn(2+). Histidine 180 acts as the Proton donor in catalysis. Residue histidine 216 participates in Mn(2+) binding.

This sequence belongs to the glycosyl hydrolase 4 family. In terms of assembly, homotetramer. Requires NAD(+) as cofactor. It depends on Mn(2+) as a cofactor.

It carries out the reaction [(1-&gt;4)-alpha-D-galacturonosyl](n) + H2O = alpha-D-galacturonate + [(1-&gt;4)-alpha-D-galacturonosyl](n-1). In terms of biological role, alpha-galacturonidase able to catalyze the hydrolysis of the chromogenic substrate p-nitrophenyl-alpha-D-galacturonic acid (pNPalphaGalUA). It is probable that alpha-1,4-di-galacturonate (GalUA(2)) is the naturally occurring substrate. This chain is Alpha-galacturonidase, found in Thermoanaerobacterium saccharolyticum (strain DSM 8691 / JW/SL-YS485).